Here is a 148-residue protein sequence, read N- to C-terminus: SsrA-binding protein (148 aa).

It belongs to the SmpB family.

The protein localises to the cytoplasm. In terms of biological role, required for rescue of stalled ribosomes mediated by trans-translation. Binds to transfer-messenger RNA (tmRNA), required for stable association of tmRNA with ribosomes. tmRNA and SmpB together mimic tRNA shape, replacing the anticodon stem-loop with SmpB. tmRNA is encoded by the ssrA gene; the 2 termini fold to resemble tRNA(Ala) and it encodes a 'tag peptide', a short internal open reading frame. During trans-translation Ala-aminoacylated tmRNA acts like a tRNA, entering the A-site of stalled ribosomes, displacing the stalled mRNA. The ribosome then switches to translate the ORF on the tmRNA; the nascent peptide is terminated with the 'tag peptide' encoded by the tmRNA and targeted for degradation. The ribosome is freed to recommence translation, which seems to be the essential function of trans-translation. This chain is SsrA-binding protein, found in Azoarcus sp. (strain BH72).